The sequence spans 192 residues: UPF0312 protein Ent638_1570 (192 aa).

The signal sequence occupies residues 1–22; it reads MKKRLLGIALGSLLFTTGSAVA.

This sequence belongs to the UPF0312 family. Type 1 subfamily.

The protein localises to the periplasm. This chain is UPF0312 protein Ent638_1570, found in Enterobacter sp. (strain 638).